A 170-amino-acid chain; its full sequence is Plastocyanin, chloroplastic (170 aa).

A chloroplast-targeting transit peptide spans 1-71; it reads MATVTSAAVA…SAMLASNAMA (71 aa). The region spanning 72-170 is the Plastocyanin-like domain; that stretch reads LEVLLGGDDG…AGMVGKVTVN (99 aa). Positions 108, 155, 158, and 163 each coordinate Cu cation.

It belongs to the plastocyanin family. It depends on Cu(2+) as a cofactor.

It localises to the plastid. Its subcellular location is the chloroplast thylakoid membrane. Functionally, participates in electron transfer between P700 and the cytochrome b6-f complex in photosystem I. The sequence is that of Plastocyanin, chloroplastic (PETE) from Solanum lycopersicum (Tomato).